We begin with the raw amino-acid sequence, 374 residues long: MAANDRAAAPGKSGGSSGADGLMRASLSAVAPGTALRDGLERILRGNTGGLIVLGSDKTVEAMCTGGFVLDVEFTATRLRELCKLDGGIVLSSDLSKILRAGVQLVPDPMIPTEETGTRHRTADRVSKQVGFPVVSVSQSMRLVALYVDGMRRVLEDSAAILSRANQALATLERYKLRLDEVAGTLSALEIEDLVTVRDVSAVAQRLEMVRRIATEIAEYVVELGTDGRLLALQLDELIAGVEPERELVVRDYVPEPTAKRSRTVDQALYELDALTHAELLELATVAKALGYTGSPEALDSAVSPRGFRLLAKVPRLPGAIIDRLVEHFGGLQKLLAASVDDLQTVDGVGEARARSVREGLSRLAESSILERYV.

The DAC domain occupies 20 to 158; that stretch reads DGLMRASLSA…DGMRRVLEDS (139 aa). Residues Gly87, Leu105, and 118-122 contribute to the ATP site; that span reads TRHRT.

This sequence belongs to the DisA family. As to quaternary structure, homooctamer. Mg(2+) is required as a cofactor.

It catalyses the reaction 2 ATP = 3',3'-c-di-AMP + 2 diphosphate. In terms of biological role, participates in a DNA-damage check-point that is active prior to asymmetric division when DNA is damaged. DisA forms globular foci that rapidly scan along the chromosomes during sporulation, searching for lesions. When a lesion is present, DisA pauses at the lesion site. This triggers a cellular response that culminates in a temporary block in sporulation initiation. Functionally, also has diadenylate cyclase activity, catalyzing the condensation of 2 ATP molecules into cyclic di-AMP (c-di-AMP). c-di-AMP acts as a signaling molecule that couples DNA integrity with progression of sporulation. The rise in c-di-AMP level generated by DisA while scanning the chromosome, operates as a positive signal that advances sporulation; upon encountering a lesion, the DisA focus arrests at the damaged site and halts c-di-AMP synthesis. The chain is DNA integrity scanning protein DisA from Streptomyces avermitilis (strain ATCC 31267 / DSM 46492 / JCM 5070 / NBRC 14893 / NCIMB 12804 / NRRL 8165 / MA-4680).